Reading from the N-terminus, the 399-residue chain is Yellow-related salivary protein LJM11 (399 aa).

The first 18 residues, 1–18 (MKVFFSIFTLVLFQGTLG), serve as a signal peptide directing secretion. C115 and C186 are joined by a disulfide. Residue N213 is glycosylated (N-linked (GlcNAc...) asparagine). C319 and C395 are oxidised to a cystine. Serotonin-binding residues include T345, N360, and F362.

This sequence belongs to the major royal jelly protein family. In terms of tissue distribution, salivary gland (at protein level).

Its subcellular location is the secreted. Its function is as follows. Probably modulates blood feeding of sand flies on vertebrate species by binding and sequestering different mediators involved in the host response. Binds biogenic amines. Binds serotonin with high affinity. Binds adrenaline and noradrenaline. Binds dopamine and octopamine. Poorly binds histamine. Induces a delayed type hypersensitivity response in host tissues. Induces systemic Th1 immune response in the host. Immunogenic; elicits antibody production in the host. Functions as a chemoattractant for host neutrophils; likely acts through a G-protein-coupled receptor and effect is dependent on calcium influx. (Microbial infection) Modulates infection caused by Leishmania species in the host. The polypeptide is Yellow-related salivary protein LJM11 (Lutzomyia longipalpis (Sand fly)).